Consider the following 588-residue polypeptide: Phosphatidylinositol-3,5-bisphosphate 3-phosphatase mtm-1 (588 aa).

Residues 20–91 (IQESIDLKLL…GQVSRIEKVG (72 aa)) form the GRAM domain. A Myotubularin phosphatase domain is found at 164–543 (GWKIYSAEKE…CGLHVWIDYY (380 aa)). Asn-293, Asn-316, and Ile-317 together coordinate a 1,2-diacyl-sn-glycero-3-phospho-(1D-myo-inositol-3,5-bisphosphate). Residues Asn-293, Asn-316, and Ile-317 each coordinate a 1,2-diacyl-sn-glycero-3-phospho-(1D-myo-inositol-3-phosphate). The active-site Phosphocysteine intermediate is the Cys-378. A 1,2-diacyl-sn-glycero-3-phospho-(1D-myo-inositol-3,5-bisphosphate)-binding residues include Ser-379, Asp-380, Gly-381, Trp-382, Asp-383, Arg-384, Lys-420, and Arg-424. Positions 379, 380, 381, 382, 383, and 384 each coordinate a 1,2-diacyl-sn-glycero-3-phospho-(1D-myo-inositol-3-phosphate). A phosphate-binding site is contributed by Ser-379. Residues Gly-381, Trp-382, Asp-383, and Arg-384 each coordinate phosphate. Arg-424 lines the a 1,2-diacyl-sn-glycero-3-phospho-(1D-myo-inositol-3-phosphate) pocket. Residues 563-588 (AQFVDEKKQLLDEIMALDDAAQKLTA) are a coiled coil.

Belongs to the protein-tyrosine phosphatase family. Non-receptor class myotubularin subfamily. Expressed in embryo, larva and in adults. Expressed in a few head and tail neurons. Expressed in hypodermis, body wall and pharyngeal muscles, sheath cells, vulva, distal tip cells and coelomocytes.

The protein resides in the cell membrane. Its subcellular location is the cell projection. It localises to the phagocytic cup. The protein localises to the apical cell membrane. It is found in the cytoplasmic granule membrane. It catalyses the reaction a 1,2-diacyl-sn-glycero-3-phospho-(1D-myo-inositol-3,5-bisphosphate) + H2O = a 1,2-diacyl-sn-glycero-3-phospho-(1D-myo-inositol-5-phosphate) + phosphate. It carries out the reaction a 1,2-diacyl-sn-glycero-3-phospho-(1D-myo-inositol-3-phosphate) + H2O = a 1,2-diacyl-sn-glycero-3-phospho-(1D-myo-inositol) + phosphate. The enzyme catalyses 1,2-dioctanoyl-sn-glycero-3-phospho-(1-D-myo-inositol-3-phosphate) + H2O = 1,2-dioctanoyl-sn-glycero-3-phospho-(1D-myo-inositol) + phosphate. Its function is as follows. Lipid phosphatase that specifically dephosphorylates phosphatidylinositol 3-phosphate (PI3P) and phosphatidylinositol 3,5-bisphosphate (PI(3,5)P2). Negatively regulates accumulation of PI3P on intracellular vesicles. Negatively regulates phagocytosis of apoptotic cells probably by limiting the recruitment and/or the activation of ced-5, ced-2 and ced-12 complex. In addition, may positively regulate phagosome maturation by promoting recycling of apoptotic receptor ced-1 back to the plasma membrane. Essential for embryonic and larval development. May promote migration of distal tip cells. The polypeptide is Phosphatidylinositol-3,5-bisphosphate 3-phosphatase mtm-1 (Caenorhabditis elegans).